The following is a 115-amino-acid chain: Androgen-binding protein homolog (115 aa).

An N-terminal signal peptide occupies residues 1 to 23 (MKGTLLLLALLVTGELGFQTTEA).

The protein belongs to the secretoglobin family.

Its subcellular location is the secreted. The sequence is that of Androgen-binding protein homolog from Mesocricetus auratus (Golden hamster).